Consider the following 318-residue polypeptide: Ribosomal protein L11 methyltransferase (318 aa).

S-adenosyl-L-methionine is bound by residues Thr161, Gly182, Asp204, and Asn247.

Belongs to the methyltransferase superfamily. PrmA family.

The protein resides in the cytoplasm. The catalysed reaction is L-lysyl-[protein] + 3 S-adenosyl-L-methionine = N(6),N(6),N(6)-trimethyl-L-lysyl-[protein] + 3 S-adenosyl-L-homocysteine + 3 H(+). Its function is as follows. Methylates ribosomal protein L11. This chain is Ribosomal protein L11 methyltransferase, found in Moorella thermoacetica (strain ATCC 39073 / JCM 9320).